The primary structure comprises 480 residues: Protein nucleotidyltransferase YdiU (480 aa).

Residues Gly-86, Gly-88, Arg-89, Lys-109, Asp-121, Gly-122, Arg-172, and Arg-179 each contribute to the ATP site. Asp-248 serves as the catalytic Proton acceptor. Residues Asn-249 and Asp-258 each coordinate Mg(2+). ATP is bound at residue Asp-258.

This sequence belongs to the SELO family. The cofactor is Mg(2+). Mn(2+) serves as cofactor.

It carries out the reaction L-seryl-[protein] + ATP = 3-O-(5'-adenylyl)-L-seryl-[protein] + diphosphate. The enzyme catalyses L-threonyl-[protein] + ATP = 3-O-(5'-adenylyl)-L-threonyl-[protein] + diphosphate. It catalyses the reaction L-tyrosyl-[protein] + ATP = O-(5'-adenylyl)-L-tyrosyl-[protein] + diphosphate. The catalysed reaction is L-histidyl-[protein] + UTP = N(tele)-(5'-uridylyl)-L-histidyl-[protein] + diphosphate. It carries out the reaction L-seryl-[protein] + UTP = O-(5'-uridylyl)-L-seryl-[protein] + diphosphate. The enzyme catalyses L-tyrosyl-[protein] + UTP = O-(5'-uridylyl)-L-tyrosyl-[protein] + diphosphate. Functionally, nucleotidyltransferase involved in the post-translational modification of proteins. It can catalyze the addition of adenosine monophosphate (AMP) or uridine monophosphate (UMP) to a protein, resulting in modifications known as AMPylation and UMPylation. This Salmonella enteritidis PT4 (strain P125109) protein is Protein nucleotidyltransferase YdiU.